We begin with the raw amino-acid sequence, 251 residues long: Ribonuclease PH (251 aa).

Phosphate is bound by residues Arg87 and 125–127 (GTR).

The protein belongs to the RNase PH family. As to quaternary structure, homohexameric ring arranged as a trimer of dimers.

The enzyme catalyses tRNA(n+1) + phosphate = tRNA(n) + a ribonucleoside 5'-diphosphate. In terms of biological role, phosphorolytic 3'-5' exoribonuclease that plays an important role in tRNA 3'-end maturation. Removes nucleotide residues following the 3'-CCA terminus of tRNAs; can also add nucleotides to the ends of RNA molecules by using nucleoside diphosphates as substrates, but this may not be physiologically important. Probably plays a role in initiation of 16S rRNA degradation (leading to ribosome degradation) during starvation. In Saccharopolyspora erythraea (strain ATCC 11635 / DSM 40517 / JCM 4748 / NBRC 13426 / NCIMB 8594 / NRRL 2338), this protein is Ribonuclease PH.